The chain runs to 346 residues: 3 beta-hydroxysteroid dehydrogenase/Delta 5--&gt;4-isomerase (346 aa).

Tyr147 (proton acceptor) is an active-site residue. Lys151 serves as a coordination point for NAD(+).

The protein belongs to the 3-beta-HSD family.

It catalyses the reaction a 3beta-hydroxy-Delta(5)-steroid + NAD(+) = a 3-oxo-Delta(5)-steroid + NADH + H(+). The catalysed reaction is a 3-oxo-Delta(5)-steroid = a 3-oxo-Delta(4)-steroid. The protein operates within lipid metabolism; steroid biosynthesis. Functionally, catalyzes the oxidative conversion of Delta(5)-ene-3-beta-hydroxy steroid, and the oxidative conversion of ketosteroids. The 3-beta-HSD enzymatic system plays a crucial role in the biosynthesis of all classes of hormonal steroids. During viral infection, steroid production contributes to virulence by inhibiting the host inflammatory response. The chain is 3 beta-hydroxysteroid dehydrogenase/Delta 5--&gt;4-isomerase (OPG174) from Homo sapiens (Human).